Consider the following 161-residue polypeptide: ATP synthase subunit b 1 (161 aa).

Residues 3 to 23 (LDATFYALVGLILFFVLIAYL) traverse the membrane as a helical segment.

It belongs to the ATPase B chain family. In terms of assembly, F-type ATPases have 2 components, F(1) - the catalytic core - and F(0) - the membrane proton channel. F(1) has five subunits: alpha(3), beta(3), gamma(1), delta(1), epsilon(1). F(0) has three main subunits: a(1), b(2) and c(10-14). The alpha and beta chains form an alternating ring which encloses part of the gamma chain. F(1) is attached to F(0) by a central stalk formed by the gamma and epsilon chains, while a peripheral stalk is formed by the delta and b chains.

The protein localises to the cell inner membrane. F(1)F(0) ATP synthase produces ATP from ADP in the presence of a proton or sodium gradient. F-type ATPases consist of two structural domains, F(1) containing the extramembraneous catalytic core and F(0) containing the membrane proton channel, linked together by a central stalk and a peripheral stalk. During catalysis, ATP synthesis in the catalytic domain of F(1) is coupled via a rotary mechanism of the central stalk subunits to proton translocation. In terms of biological role, component of the F(0) channel, it forms part of the peripheral stalk, linking F(1) to F(0). The chain is ATP synthase subunit b 1 from Rhizobium meliloti (strain 1021) (Ensifer meliloti).